The chain runs to 162 residues: Cytochrome c-type biogenesis protein CcmE (162 aa).

Topologically, residues 1–13 (MSFWPQSRKARRR) are cytoplasmic. Residues 14 to 34 (LTILLAIAPVLALAVGLALYG) form a helical; Signal-anchor for type II membrane protein membrane-spanning segment. The Periplasmic portion of the chain corresponds to 35 to 162 (LRDSISLFYT…DAPAYGSQKP (128 aa)). The heme site is built by histidine 128 and tyrosine 132. Residues 140–151 (ALKEQGEWRGEG) are compositionally biased toward basic and acidic residues. The disordered stretch occupies residues 140–162 (ALKEQGEWRGEGADAPAYGSQKP).

The protein belongs to the CcmE/CycJ family.

It is found in the cell inner membrane. Functionally, heme chaperone required for the biogenesis of c-type cytochromes. Transiently binds heme delivered by CcmC and transfers the heme to apo-cytochromes in a process facilitated by CcmF and CcmH. This is Cytochrome c-type biogenesis protein CcmE from Caulobacter vibrioides (strain ATCC 19089 / CIP 103742 / CB 15) (Caulobacter crescentus).